The sequence spans 847 residues: Guanine nucleotide exchange factor VAV3 (847 aa).

One can recognise a Calponin-homology (CH) domain in the interval 1–119 (MEPWKQCAQW…ETLSRLSRTP (119 aa)). Y141 is subject to Phosphotyrosine. The 180-residue stretch at 192-371 (IRSCCLAEIR…KDLAQYVNEV (180 aa)) folds into the DH domain. Positions 400-502 (RPQGDGEIRI…WLEQFEMALS (103 aa)) constitute a PH domain. A Phorbol-ester/DAG-type zinc finger spans residues 513 to 562 (FHDFKMHTFTRVTSCRVCQMLLRGTFYQGYLCFKCGAKAHKECLGRVDNC). The sufficient for interaction with ROS1 stretch occupies residues 560 to 847 (DNCGRVNSVE…FPSTYVEEDE (288 aa)). An SH3 1 domain is found at 592–660 (PGLPKMQVIR…PSDAVKPSPC (69 aa)). The SH2 domain maps to 672–766 (WYAGPMERLQ…TLDTTLQFPY (95 aa)). An SH3 2 domain is found at 788–847 (KVLGIAIARYDFCARDMRELSLLKGDMVKIYTKMSANGWWRGEVNGRVGWFPSTYVEEDE).

Interacts with the PH domain of APS. Interacts with ROS1; constitutive interaction that mediates VAV3 phosphorylation. Interacts (via SH2 domains) with the phosphorylated form of EPHA2. Phosphorylated. Phosphorylation can be mediated by ROS1. In osteoclasts, undergoes tyrosine phosphorylation in response to CSF1. As to expression, abundantly expressed in osteoclasts and mature osteoblasts. Also expressed in bone marrow macrophages (at protein level):.

In terms of biological role, exchange factor for GTP-binding proteins RhoA, RhoG and, to a lesser extent, Rac1. Binds physically to the nucleotide-free states of those GTPases. Plays an important role in angiogenesis. Its recruitment by phosphorylated EPHA2 is critical for EFNA1-induced RAC1 GTPase activation and vascular endothelial cell migration and assembly. May be important for integrin-mediated signaling, at least in some cell types. In osteoclasts, along with SYK tyrosine kinase, required for signaling through integrin alpha-v/beta-1 (ITAGV-ITGB1), a crucial event for osteoclast proper cytoskeleton organization and function. This signaling pathway involves RAC1, but not RHO, activation. Necessary for proper wound healing. In the course of wound healing, required for the phagocytotic cup formation preceding macrophage phagocytosis of apoptotic neutrophils. Responsible for integrin beta-2-mediated macrophage adhesion and, to a lesser extent, contributes to beta-3-mediated adhesion. Does not affect integrin beta-1-mediated adhesion. The chain is Guanine nucleotide exchange factor VAV3 (Vav3) from Mus musculus (Mouse).